A 529-amino-acid polypeptide reads, in one-letter code: MPSKGKDKKKGKSKGKDTKKLIKTDESVVDRAKANASLWEARLEVTELSRIKYRDTSRILAKSNEDLKKKQCKMEKDIMSVLSYLKKQDQEKDNMIEKLKQQLNETKEKAQEEKDKLEQKYTRQINELEGQFHQKAKEIGMIHTELKAVRQFQKRKIQVERELDDLKENLRNTERIHQETLRRLESRFFEEKHRLEQEAEKKIIMLAERAHHEAIVQLNDAGRNVFKENDYLQKALAYHLKETDALQKNSQKLQESHTLLLHQKEINDLLVKEKIMQLVQQRSQIQTLQKKVVNLETALSYMTKEFESEVLKLQQHAMIENQAGQVEIDKLQHLLQMKDREMNRVKKLAKNILDERTEVERFFLDALHQVKQQILISRKHYKQIAQAAFNLKMRAACTGRTEYPKIRTFDGREHSTNSVNQDLLEAEKWTHIEGNVDIGDLTWEQKEKVLRLLFAKMNGCPSRKYNQSSRPPVPDYVVSDSGETKEFGDESKLQDKIFITQQIAISDSSGEVVLPTIPKEPQESDTGTF.

The segment covering 1–13 (MPSKGKDKKKGKS) has biased composition (basic residues). The disordered stretch occupies residues 1 to 22 (MPSKGKDKKKGKSKGKDTKKLI). Coiled coils occupy residues 85 to 201 (LKKQ…EAEK) and 271 to 361 (VKEK…EVER).

This sequence belongs to the BBOF1 family. Interacts with MNS1 and ODF2.

The protein localises to the cytoplasm. The protein resides in the cytoskeleton. It localises to the cilium basal body. Its subcellular location is the flagellum axoneme. Plays an essential role in sperm motility and male fertility by stabilizing the sperm flagellar axonemal structure. May be required for the stability of ODF2 and MANS1 proteins. Dispensable for the assembly and function of motile cilia. The chain is Basal body-orientation factor 1 from Homo sapiens (Human).